The chain runs to 316 residues: Ribosomal RNA small subunit methyltransferase H (316 aa).

S-adenosyl-L-methionine-binding positions include 35 to 37 (AGH), Asp-55, Phe-84, Asp-105, and Gln-112.

This sequence belongs to the methyltransferase superfamily. RsmH family.

It localises to the cytoplasm. It carries out the reaction cytidine(1402) in 16S rRNA + S-adenosyl-L-methionine = N(4)-methylcytidine(1402) in 16S rRNA + S-adenosyl-L-homocysteine + H(+). In terms of biological role, specifically methylates the N4 position of cytidine in position 1402 (C1402) of 16S rRNA. The sequence is that of Ribosomal RNA small subunit methyltransferase H from Streptococcus pneumoniae (strain Taiwan19F-14).